The primary structure comprises 458 residues: Maturase-like protein 1 (458 aa).

To group II intron maturases.

The protein resides in the plastid. Its subcellular location is the chloroplast. In terms of biological role, could be required for group III intron excision. This is Maturase-like protein 1 (mat1) from Euglena gracilis.